A 264-amino-acid polypeptide reads, in one-letter code: Thymidylate synthase (264 aa).

R21 is a binding site for dUMP. H51 serves as a coordination point for (6R)-5,10-methylene-5,6,7,8-tetrahydrofolate. A dUMP-binding site is contributed by 126 to 127 (RR). C146 serves as the catalytic Nucleophile. Residues 166 to 169 (RSAD), N177, and 207 to 209 (HLY) each bind dUMP. (6R)-5,10-methylene-5,6,7,8-tetrahydrofolate is bound at residue D169. A (6R)-5,10-methylene-5,6,7,8-tetrahydrofolate-binding site is contributed by S263.

The protein belongs to the thymidylate synthase family. Bacterial-type ThyA subfamily. As to quaternary structure, homodimer.

It is found in the cytoplasm. It catalyses the reaction dUMP + (6R)-5,10-methylene-5,6,7,8-tetrahydrofolate = 7,8-dihydrofolate + dTMP. It participates in pyrimidine metabolism; dTTP biosynthesis. Its function is as follows. Catalyzes the reductive methylation of 2'-deoxyuridine-5'-monophosphate (dUMP) to 2'-deoxythymidine-5'-monophosphate (dTMP) while utilizing 5,10-methylenetetrahydrofolate (mTHF) as the methyl donor and reductant in the reaction, yielding dihydrofolate (DHF) as a by-product. This enzymatic reaction provides an intracellular de novo source of dTMP, an essential precursor for DNA biosynthesis. The chain is Thymidylate synthase from Neisseria meningitidis serogroup A / serotype 4A (strain DSM 15465 / Z2491).